The chain runs to 824 residues: Leucine--tRNA ligase (824 aa).

Residues 42-52 (PYPSGRIHMGH) carry the 'HIGH' region motif. The short motif at 581-585 (KMSKS) is the 'KMSKS' region element. Position 584 (lysine 584) interacts with ATP.

It belongs to the class-I aminoacyl-tRNA synthetase family.

It localises to the cytoplasm. It carries out the reaction tRNA(Leu) + L-leucine + ATP = L-leucyl-tRNA(Leu) + AMP + diphosphate. The polypeptide is Leucine--tRNA ligase (Geotalea daltonii (strain DSM 22248 / JCM 15807 / FRC-32) (Geobacter daltonii)).